A 123-amino-acid polypeptide reads, in one-letter code: Protein Wnt-7b (123 aa).

The O-palmitoleoyl serine; by PORCN moiety is linked to residue Ser-1. The segment at Val-33–Thr-61 is disordered linker. A disulfide bridge connects residues Cys-89 and Cys-104. Asn-90 is a glycosylation site (N-linked (GlcNAc...) asparagine).

The protein belongs to the Wnt family. In terms of processing, palmitoleoylation is required for efficient binding to frizzled receptors. Depalmitoleoylation leads to Wnt signaling pathway inhibition.

It localises to the secreted. The protein resides in the extracellular space. Its subcellular location is the extracellular matrix. In terms of biological role, ligand for members of the frizzled family of seven transmembrane receptors that functions in the canonical Wnt/beta-catenin signaling pathway. Required for normal fusion of the chorion and the allantois during placenta development. Required for central nervous system (CNS) angiogenesis and blood-brain barrier regulation. The polypeptide is Protein Wnt-7b (WNT-7B) (Sceloporus occidentalis (Western fence lizard)).